The following is a 246-amino-acid chain: Glucosamine-6-phosphate deaminase (246 aa).

Catalysis depends on Asp-67, which acts as the Proton acceptor; for enolization step. Catalysis depends on Asn-136, which acts as the For ring-opening step. The active-site Proton acceptor; for ring-opening step is the His-138. Glu-143 serves as the catalytic For ring-opening step.

The protein belongs to the glucosamine/galactosamine-6-phosphate isomerase family. NagB subfamily.

The catalysed reaction is alpha-D-glucosamine 6-phosphate + H2O = beta-D-fructose 6-phosphate + NH4(+). It functions in the pathway amino-sugar metabolism; N-acetylneuraminate degradation; D-fructose 6-phosphate from N-acetylneuraminate: step 5/5. Functionally, catalyzes the reversible isomerization-deamination of glucosamine 6-phosphate (GlcN6P) to form fructose 6-phosphate (Fru6P) and ammonium ion. This Halalkalibacterium halodurans (strain ATCC BAA-125 / DSM 18197 / FERM 7344 / JCM 9153 / C-125) (Bacillus halodurans) protein is Glucosamine-6-phosphate deaminase.